A 137-amino-acid polypeptide reads, in one-letter code: Large ribosomal subunit protein uL16 (137 aa).

Belongs to the universal ribosomal protein uL16 family. Part of the 50S ribosomal subunit.

Functionally, binds 23S rRNA and is also seen to make contacts with the A and possibly P site tRNAs. This Alkalilimnicola ehrlichii (strain ATCC BAA-1101 / DSM 17681 / MLHE-1) protein is Large ribosomal subunit protein uL16.